We begin with the raw amino-acid sequence, 293 residues long: MKKPILGSHVGMSKSNKHGEYLIGSVKEALSYEANTLMFYTGAPQNSVRTATDKLYIEEFNQLLKENNINKDHIVVHAPYIINISNPVNQTTWDFGVDFLKQEIKRCEDIGVKILVLHPGARLKGDYTDALNALVKGLNAVASSQTNVIIALETMAGKGTEVGLSLNDFKYVIDNVNEPEKVAVCLDTCHMHDAGYDFNNWELIKEEINKTIGKDKVLCFHLNDSKNPLLAHKDRHENIGYGYIGFDNLLKVLWDEEYIDIPKILETPYVEDKPPYKEEIENLINKNFSKKVK.

Zn(2+) contacts are provided by His-77, His-118, Glu-153, Asp-187, His-190, His-221, Asp-234, His-236, and Glu-266.

The protein belongs to the AP endonuclease 2 family. The cofactor is Zn(2+).

The catalysed reaction is Endonucleolytic cleavage to 5'-phosphooligonucleotide end-products.. In terms of biological role, endonuclease IV plays a role in DNA repair. It cleaves phosphodiester bonds at apurinic or apyrimidinic (AP) sites, generating a 3'-hydroxyl group and a 5'-terminal sugar phosphate. The sequence is that of Probable endonuclease 4 from Mesoplasma florum (strain ATCC 33453 / NBRC 100688 / NCTC 11704 / L1) (Acholeplasma florum).